A 281-amino-acid chain; its full sequence is Bifunctional protein FolD 1 (281 aa).

Residues 165–167 (GRS), Ser190, and Ile231 each bind NADP(+).

It belongs to the tetrahydrofolate dehydrogenase/cyclohydrolase family. In terms of assembly, homodimer.

It carries out the reaction (6R)-5,10-methylene-5,6,7,8-tetrahydrofolate + NADP(+) = (6R)-5,10-methenyltetrahydrofolate + NADPH. The enzyme catalyses (6R)-5,10-methenyltetrahydrofolate + H2O = (6R)-10-formyltetrahydrofolate + H(+). It participates in one-carbon metabolism; tetrahydrofolate interconversion. Its function is as follows. Catalyzes the oxidation of 5,10-methylenetetrahydrofolate to 5,10-methenyltetrahydrofolate and then the hydrolysis of 5,10-methenyltetrahydrofolate to 10-formyltetrahydrofolate. The polypeptide is Bifunctional protein FolD 1 (Desulfitobacterium hafniense (strain Y51)).